Consider the following 187-residue polypeptide: Lysozyme 3 (187 aa).

The signal sequence occupies residues 1-18; sequence MNGLFLFCVATTAALAYG. Positions 68–183 constitute an I-type lysozyme domain; the sequence is TGIVSQQCLQ…WSHVHAQGCS (116 aa). Disulfide bonds link C75-C151, C80-C86, C91-C100, C113-C133, C123-C129, and C147-C165. The Proton donor role is filled by E83. Residue D94 is the Nucleophile of the active site. 106–112 serves as a coordination point for substrate; sequence KEGYWHD. Substrate is bound by residues Y137 and 158-160; that span reads HNG.

Highest levels of expression detected in the digestive glands. Lower levels in the mantle, labial palps, gills and style-midgut sac, and lowest levels detected in the hemocytes. Not detected in the gonads.

It is found in the secreted. It carries out the reaction Hydrolysis of (1-&gt;4)-beta-linkages between N-acetylmuramic acid and N-acetyl-D-glucosamine residues in a peptidoglycan and between N-acetyl-D-glucosamine residues in chitodextrins.. Functionally, has antibacterial activity against the Gram-negative bacterium E.coli. No antibacterial activity detected against the Gram-negative bacterium V.vulnificus. In Crassostrea virginica (Eastern oyster), this protein is Lysozyme 3.